A 191-amino-acid polypeptide reads, in one-letter code: UPF0312 protein Sden_2128 (191 aa).

The signal sequence occupies residues 1–22 (MKKHLLASLLGASLLLPTAVNA).

It belongs to the UPF0312 family. Type 1 subfamily.

It is found in the periplasm. The chain is UPF0312 protein Sden_2128 from Shewanella denitrificans (strain OS217 / ATCC BAA-1090 / DSM 15013).